Here is a 102-residue protein sequence, read N- to C-terminus: Small ribosomal subunit protein uS10 (102 aa).

This sequence belongs to the universal ribosomal protein uS10 family. In terms of assembly, part of the 30S ribosomal subunit.

Involved in the binding of tRNA to the ribosomes. This is Small ribosomal subunit protein uS10 from Acidothermus cellulolyticus (strain ATCC 43068 / DSM 8971 / 11B).